Consider the following 358-residue polypeptide: Porphobilinogen deaminase, chloroplastic (358 aa).

A signal peptide spans 1–24 (MPPPPRCAATTAHHSLLGSPTCLA). Position 290 is an S-(dipyrrolylmethanemethyl)cysteine (Cys-290).

The protein belongs to the HMBS family. Requires dipyrromethane as cofactor.

It is found in the plastid. The protein localises to the chloroplast. It carries out the reaction 4 porphobilinogen + H2O = hydroxymethylbilane + 4 NH4(+). The protein operates within porphyrin-containing compound metabolism; protoporphyrin-IX biosynthesis; coproporphyrinogen-III from 5-aminolevulinate: step 2/4. It participates in porphyrin-containing compound metabolism; chlorophyll biosynthesis. Its function is as follows. Tetrapolymerization of the monopyrrole PBG into the hydroxymethylbilane pre-uroporphyrinogen in several discrete steps. This chain is Porphobilinogen deaminase, chloroplastic (HEMC), found in Oryza sativa subsp. japonica (Rice).